Here is a 237-residue protein sequence, read N- to C-terminus: MQKLAELYRGKAKTVYTTENPDLLVLEFRNDTSALDGQRIEQFDRKGMVNNKFNHFIMSKLEEAGIPTQMERLLSDNEVLVKKLDMVPVECVIRNRAAGSLVKRLGIEEGLVLNPPLFDLFLKNDEMHDPMVNESYCETFGWVNKQHLARMRELSYQANDVLSKLFDDAGLILVDFKLEFGLFNGEVVLGDEFSPDGSRLWDKNTLDKMDKDRFRQSLGGLIEAYEEVARRIGVKLD.

The protein belongs to the SAICAR synthetase family.

The enzyme catalyses 5-amino-1-(5-phospho-D-ribosyl)imidazole-4-carboxylate + L-aspartate + ATP = (2S)-2-[5-amino-1-(5-phospho-beta-D-ribosyl)imidazole-4-carboxamido]succinate + ADP + phosphate + 2 H(+). Its pathway is purine metabolism; IMP biosynthesis via de novo pathway; 5-amino-1-(5-phospho-D-ribosyl)imidazole-4-carboxamide from 5-amino-1-(5-phospho-D-ribosyl)imidazole-4-carboxylate: step 1/2. The chain is Phosphoribosylaminoimidazole-succinocarboxamide synthase from Serratia proteamaculans (strain 568).